A 505-amino-acid polypeptide reads, in one-letter code: MDPGNENSATEAAAIIDLDPDFEPQSRPRSCTWPLPRPEIANQPSEPPEVEPDLGEKVHTEGRSEPILLPSRLPEPAGGPQPGILGAVTGPRKGGSRRNAWGNQSYAELISQAIESAPEKRLTLAQIYEWMVRTVPYFKDKGDSNSSAGWKNSIRHNLSLHSKFIKVHNEATGKSSWWMLNPEGGKSGKAPRRRAASMDSSSKLLRGRSKAPKKKPSVLPAPPEGATPTSPVGHFAKWSGSPCSRNREEADMWTTFRPRSSSNASSVSTRLSPLRPESEVLAEEIPASVSSYAGGVPPTLNEGLELLDGLNLTSSHSLLSRSGLSGFSLQHPGVTGPLHTYSSSLFSPAEGPLSAGEGCFSSSQALEALLTSDTPPPPADVLMTQVDPILSQAPTLLLLGGLPSSSKLATGVGLCPKPLEAPGPSSLVPTLSMIAPPPVMASAPIPKALGTPVLTPPTEAASQDRMPQDLDLDMYMENLECDMDNIISDLMDEGEGLDFNFEPDP.

Residues 1 to 10 are compositionally biased toward polar residues; sequence MDPGNENSAT. Disordered stretches follow at residues 1–100 and 176–246; these read MDPG…RRNA and SWWM…CSRN. Residue Thr32 is modified to Phosphothreonine; by PKB/AKT1. Positions 54-64 are enriched in basic and acidic residues; it reads LGEKVHTEGRS. The segment at residues 100–188 is a DNA-binding region (fork-head); sequence AWGNQSYAEL…MLNPEGGKSG (89 aa). Ser197 carries the post-translational modification Phosphoserine; by PKB/AKT1. Residues 205 to 216 show a composition bias toward basic residues; sequence LRGRSKAPKKKP. At Ser262 the chain carries Phosphoserine; by PKB/AKT1.

In terms of assembly, interacts with CREBBP/CBP, CTNNB1, MYOCD, SIRT1, SRF and YWHAZ. Acetylated by CREBBP/CBP and deacetylated by SIRT1. Binding of YWHAZ inhibits DNA-binding. Interacts with USP7; the interaction is enhanced in presence of hydrogen peroxide and occurs independently of TP53. Interacts with NLK, and this inhibits monoubiquitination and transcriptional activity. Interacts with FOXK1; the interaction inhibits MEF2C transactivation activity. Acetylation by CREBBP/CBP, which is induced by peroxidase stress, inhibits transcriptional activity. Deacetylation by SIRT1 is NAD-dependent and stimulates transcriptional activity. Post-translationally, phosphorylation by PKB/AKT1 inhibits transcriptional activity and is responsible for cytoplasmic localization. May be phosphorylated at multiple sites by NLK. In terms of processing, monoubiquitinated; monoubiquitination is induced by oxidative stress and reduced by deacetylase inhibitors; results in its relocalization to the nucleus and its increased transcriptional activity. Deubiquitinated by USP7; deubiquitination is induced by oxidative stress; enhances its interaction with USP7 and consequently, deubiquitination; increases its translocation to the cytoplasm and inhibits its transcriptional activity. Hydrogene-peroxide-induced ubiquitination and USP7-mediated deubiquitination have no major effect on its protein stability. As to expression, heart, brain, placenta, lung, liver, skeletal muscle, kidney and pancreas. Isoform zeta is most abundant in the liver, kidney, and pancreas.

It is found in the cytoplasm. Its subcellular location is the nucleus. Transcription factor involved in the regulation of the insulin signaling pathway. Binds to insulin-response elements (IREs) and can activate transcription of IGFBP1. Down-regulates expression of HIF1A and suppresses hypoxia-induced transcriptional activation of HIF1A-modulated genes. Also involved in negative regulation of the cell cycle. Involved in increased proteasome activity in embryonic stem cells (ESCs) by activating expression of PSMD11 in ESCs, leading to enhanced assembly of the 26S proteasome, followed by higher proteasome activity. In Homo sapiens (Human), this protein is Forkhead box protein O4 (FOXO4).